The primary structure comprises 487 residues: Glutamyl-tRNA(Gln) amidotransferase subunit A (487 aa).

Residues Lys79 and Ser158 each act as charge relay system in the active site. Ser182 functions as the Acyl-ester intermediate in the catalytic mechanism.

The protein belongs to the amidase family. GatA subfamily. Heterotrimer of A, B and C subunits.

It catalyses the reaction L-glutamyl-tRNA(Gln) + L-glutamine + ATP + H2O = L-glutaminyl-tRNA(Gln) + L-glutamate + ADP + phosphate + H(+). In terms of biological role, allows the formation of correctly charged Gln-tRNA(Gln) through the transamidation of misacylated Glu-tRNA(Gln) in organisms which lack glutaminyl-tRNA synthetase. The reaction takes place in the presence of glutamine and ATP through an activated gamma-phospho-Glu-tRNA(Gln). This Ehrlichia ruminantium (strain Gardel) protein is Glutamyl-tRNA(Gln) amidotransferase subunit A.